The primary structure comprises 294 residues: Probable aspartoacylase (294 aa).

Positions 14 and 17 each coordinate Zn(2+). Substrate is bound by residues R56 and 63–64; that span reads NR. Residue H106 coordinates Zn(2+). Residues E164 and Y275 each coordinate substrate.

Belongs to the AspA/AstE family. Aspartoacylase subfamily. Zn(2+) serves as cofactor.

It catalyses the reaction an N-acyl-L-aspartate + H2O = a carboxylate + L-aspartate. This is Probable aspartoacylase from Nostoc sp. (strain PCC 7120 / SAG 25.82 / UTEX 2576).